Here is a 702-residue protein sequence, read N- to C-terminus: Elongation factor G (702 aa).

The region spanning 8–286 (DKVRNIGIIA…AVVEYLPSPL (279 aa)) is the tr-type G domain. GTP-binding positions include 17 to 24 (AHIDAGKT), 85 to 89 (DTPGH), and 139 to 142 (NKMD).

This sequence belongs to the TRAFAC class translation factor GTPase superfamily. Classic translation factor GTPase family. EF-G/EF-2 subfamily.

It localises to the cytoplasm. Its function is as follows. Catalyzes the GTP-dependent ribosomal translocation step during translation elongation. During this step, the ribosome changes from the pre-translocational (PRE) to the post-translocational (POST) state as the newly formed A-site-bound peptidyl-tRNA and P-site-bound deacylated tRNA move to the P and E sites, respectively. Catalyzes the coordinated movement of the two tRNA molecules, the mRNA and conformational changes in the ribosome. In Chloroflexus aggregans (strain MD-66 / DSM 9485), this protein is Elongation factor G.